We begin with the raw amino-acid sequence, 67 residues long: Large ribosomal subunit protein bL35 (67 aa).

Residues 21-50 are disordered; it reads KVMCGPGNKRHGLINRPQKMKRTNRGPQTM. A compositionally biased stretch (basic residues) spans 28 to 44; sequence NKRHGLINRPQKMKRTN.

This sequence belongs to the bacterial ribosomal protein bL35 family.

This is Large ribosomal subunit protein bL35 from Gluconobacter oxydans (strain 621H) (Gluconobacter suboxydans).